The chain runs to 134 residues: Phosphoribosyl-AMP cyclohydrolase (134 aa).

Residue Asp-80 participates in Mg(2+) binding. Zn(2+) is bound at residue Cys-81. Mg(2+)-binding residues include Asp-82 and Asp-84. Residues Cys-98 and Cys-105 each coordinate Zn(2+).

It belongs to the PRA-CH family. Homodimer. The cofactor is Mg(2+). Zn(2+) serves as cofactor.

The protein localises to the cytoplasm. The catalysed reaction is 1-(5-phospho-beta-D-ribosyl)-5'-AMP + H2O = 1-(5-phospho-beta-D-ribosyl)-5-[(5-phospho-beta-D-ribosylamino)methylideneamino]imidazole-4-carboxamide. It functions in the pathway amino-acid biosynthesis; L-histidine biosynthesis; L-histidine from 5-phospho-alpha-D-ribose 1-diphosphate: step 3/9. Catalyzes the hydrolysis of the adenine ring of phosphoribosyl-AMP. The sequence is that of Phosphoribosyl-AMP cyclohydrolase from Janthinobacterium sp. (strain Marseille) (Minibacterium massiliensis).